We begin with the raw amino-acid sequence, 320 residues long: MQYQTHWIEHSVVKILSTTGKNHIALVAGGMSAEREVSLVSSEGVQQALIALGYKVTFIDMGADIAVKLQEIKPDIVFNCLHGTYGEDGCLPGLLNIMRIPYTHSGVLSSALAFNKIHSSSWFFANSINTAESIVVSKSYNINTDPMKRPYVIKPLTQGSSIGVEVIFEEDDFNFADYDFPYGDQVVIERYIKGREFQVAVLNSKALGALEIKLIKNRFYDYETKYTEGFAEHLCPAPLHANLYEKLLIESEKIYKTMNCKGPARAEFILEEQTNKLYALEINTHPGMTPLSIVPEIAAYAGINFTNLIAEIIKTASFES.

Residues 120–314 (SSWFFANSIN…FTNLIAEIIK (195 aa)) form the ATP-grasp domain. Residue 147–198 (MKRPYVIKPLTQGSSIGVEVIFEEDDFNFADYDFPYGDQVVIERYIKGREFQ) coordinates ATP. Glu267, Glu281, and Asn283 together coordinate Mg(2+).

This sequence belongs to the D-alanine--D-alanine ligase family. It depends on Mg(2+) as a cofactor. The cofactor is Mn(2+).

Its subcellular location is the cytoplasm. It carries out the reaction 2 D-alanine + ATP = D-alanyl-D-alanine + ADP + phosphate + H(+). Its pathway is cell wall biogenesis; peptidoglycan biosynthesis. Functionally, cell wall formation. The protein is D-alanine--D-alanine ligase of Rickettsia akari (strain Hartford).